Reading from the N-terminus, the 190-residue chain is Elongation factor P-like protein (190 aa).

It belongs to the elongation factor P family.

The sequence is that of Elongation factor P-like protein from Klebsiella pneumoniae (strain 342).